The chain runs to 354 residues: DNA integrity scanning protein DisA (354 aa).

In terms of domain architecture, DAC spans 6-144; that stretch reads GIGIKNVLKI…GDIKYVLRES (139 aa). Residues G73, L91, and 104–108 contribute to the ATP site; that span reads TRHRT.

This sequence belongs to the DisA family. In terms of assembly, homooctamer. It depends on Mg(2+) as a cofactor.

The enzyme catalyses 2 ATP = 3',3'-c-di-AMP + 2 diphosphate. Functionally, participates in a DNA-damage check-point that is active prior to asymmetric division when DNA is damaged. DisA forms globular foci that rapidly scan along the chromosomes during sporulation, searching for lesions. When a lesion is present, DisA pauses at the lesion site. This triggers a cellular response that culminates in a temporary block in sporulation initiation. Also has diadenylate cyclase activity, catalyzing the condensation of 2 ATP molecules into cyclic di-AMP (c-di-AMP). c-di-AMP acts as a signaling molecule that couples DNA integrity with progression of sporulation. The rise in c-di-AMP level generated by DisA while scanning the chromosome, operates as a positive signal that advances sporulation; upon encountering a lesion, the DisA focus arrests at the damaged site and halts c-di-AMP synthesis. The polypeptide is DNA integrity scanning protein DisA (Clostridium beijerinckii (strain ATCC 51743 / NCIMB 8052) (Clostridium acetobutylicum)).